A 330-amino-acid chain; its full sequence is Beta-ketoacyl-[acyl-carrier-protein] synthase III (330 aa).

Catalysis depends on residues Cys115 and His255. Residues 256–260 (QANFR) are ACP-binding. Asn285 is a catalytic residue.

It belongs to the thiolase-like superfamily. FabH family. As to quaternary structure, homodimer.

The protein resides in the cytoplasm. It catalyses the reaction malonyl-[ACP] + acetyl-CoA + H(+) = 3-oxobutanoyl-[ACP] + CO2 + CoA. It functions in the pathway lipid metabolism; fatty acid biosynthesis. Functionally, catalyzes the condensation reaction of fatty acid synthesis by the addition to an acyl acceptor of two carbons from malonyl-ACP. Catalyzes the first condensation reaction which initiates fatty acid synthesis and may therefore play a role in governing the total rate of fatty acid production. Possesses both acetoacetyl-ACP synthase and acetyl transacylase activities. Its substrate specificity determines the biosynthesis of branched-chain and/or straight-chain of fatty acids. The sequence is that of Beta-ketoacyl-[acyl-carrier-protein] synthase III from Helicobacter pylori (strain G27).